The following is a 459-amino-acid chain: uncharacterized protein (459 aa).

12 helical membrane-spanning segments follow: residues 25-45 (SYGF…IYLL), 52-72 (AGIP…FAAI), 95-115 (PYLL…FLSP), 123-143 (LIYA…VNIP), 167-187 (IGSL…LVKF), 192-212 (VGYP…FYIC), 249-269 (VLMT…LVYF), 279-299 (LMAY…VFLP), 310-330 (TAMI…MLPS), 332-352 (VYVF…PNGI), 389-409 (SLSG…PNAV), and 420-440 (ALLL…IGFL).

The protein belongs to the sodium:galactoside symporter (TC 2.A.2) family.

Its subcellular location is the cell membrane. This is an uncharacterized protein from Bacillus subtilis (strain 168).